A 67-amino-acid polypeptide reads, in one-letter code: Probable Sec-independent protein translocase protein TatE (67 aa).

The chain crosses the membrane as a helical span at residues 4-21 (ISITKLLVVAALVVLLFG).

Belongs to the TatA/E family. TatE subfamily.

Its subcellular location is the cell inner membrane. Part of the twin-arginine translocation (Tat) system that transports large folded proteins containing a characteristic twin-arginine motif in their signal peptide across membranes. TatE shares overlapping functions with TatA. This chain is Probable Sec-independent protein translocase protein TatE, found in Enterobacter cloacae subsp. cloacae (strain ATCC 13047 / DSM 30054 / NBRC 13535 / NCTC 10005 / WDCM 00083 / NCDC 279-56).